A 224-amino-acid polypeptide reads, in one-letter code: Retinoschisin (224 aa).

The N-terminal stretch at 1-23 (MPHKIEGFFLLLLFGYEATLGLS) is a signal peptide. The F5/8 type C domain maps to 63–219 (CPYHKPLGFE…IAIRMELLEC (157 aa)). 2 disulfides stabilise this stretch: Cys63-Cys219 and Cys110-Cys142.

Homooctamer of 4 homodimers; disulfide-linked. The homooctamer has a flat, cogwheel structure with a diameter of about 14 nm. Two stacked octamers can assemble to form a hexadecamer. Detected in the eye cup. Detected in retina, in the inner segment of the photoreceptors, the inner nuclear layer, the inner plexiform layer and the ganglion cell layer (at protein level). Restricted to the retina. At the mRNA level, detected only within the photoreceptor cell layer, most prominently within the inner segments of the photoreceptors. Undetectable in the inner plexiform layers and the inner nuclear layer.

It localises to the secreted. It is found in the cell membrane. In terms of biological role, binds negatively charged membrane lipids, such as phosphatidylserine and phosphoinositides. May play a role in cell-cell adhesion processes in the retina, via homomeric interaction between octamers present on the surface of two neighboring cells. Required for normal structure and function of the retina. In Mus musculus (Mouse), this protein is Retinoschisin (Rs1).